Here is a 408-residue protein sequence, read N- to C-terminus: MSDKSHQIYCYFWLFGLINNVLYVVILSAAVDIVGPTLPKSLVLLADIFPSLAIKLCSPFFIDRIKYSYRIWSLITMSCLGMFLVSFKNLFVCLLGISFASISSGFGEVTFLQLTHYYKQISLNGWSSGTGGAGIIGGASYMFLTSIFKVPVKLTLLVFSLLPFAFLFYFKLESNDTNLTYQSLQQIDEAEDDQLVPFPVAFTHTNASQSLYSTRQHILQTVKRLRRLVFPYMVPLTTVYLFEYLINQAVAPTLLFPINGDERSKSMPFFFHKYRDIYVTYGTLYQLGVFISRSFGHLMRMRSLYILAFLQGVNLCITVLQSWFYVTHSPWAVMILIFYEGFLGGASYVNTFLNILEQEDPDETEFAMGAVSIADSFGVFLAALLGLGLEPKLCRHQIADDRPWCRME.

Positions 1 to 30 are cleaved as a signal peptide; it reads MSDKSHQIYCYFWLFGLINNVLYVVILSAA. A run of 7 helical transmembrane segments spans residues 42 to 62, 80 to 100, 128 to 148, 150 to 170, 238 to 258, 323 to 343, and 369 to 389; these read LVLL…PFFI, LGMF…ISFA, SGTG…TSIF, VPVK…LFYF, TVYL…LFPI, WFYV…EGFL, and GAVS…GLGL.

This sequence belongs to the battenin family.

Its subcellular location is the vacuole membrane. Its function is as follows. Plays a role in vacuolar arginine transport. Involved in pH homeostasis. May be involved in ion homeostasis together with IST2. Not necessary for mitochondrial function or ATP synthase degradation. The polypeptide is Protein BTN1 (YHC3) (Saccharomyces cerevisiae (strain ATCC 204508 / S288c) (Baker's yeast)).